The following is a 76-amino-acid chain: U-actitoxin-Avd8c (76 aa).

The first 16 residues, 1 to 16 (LVIVFVVLLGVPLISA), serve as a signal peptide directing secretion. A propeptide spanning residues 17-33 (NEEELLAILQDQRNDAR) is cleaved from the precursor.

This sequence belongs to the sea anemone 8 toxin family.

It localises to the secreted. The protein localises to the nematocyst. The polypeptide is U-actitoxin-Avd8c (Anemonia viridis (Snakelocks anemone)).